We begin with the raw amino-acid sequence, 681 residues long: T-box brain protein 1 (681 aa).

Disordered regions lie at residues 43 to 83 (TDNL…RSKL) and 108 to 127 (SQSS…FPYP). The span at 58–68 (GMTNQSDTDNF) shows a compositional bias: polar residues. Low complexity predominate over residues 108 to 122 (SQSSQPQSAATAPSA). A DNA-binding region (T-box) is located at residues 213–393 (LWLKFHRHQT…HNPFAKGFRD (181 aa)). Thr408 carries the phosphothreonine modification. Ser410 bears the Phosphoserine mark. The tract at residues 447-483 (PGAGAGPGPGTDRSVPHTNGLLSPQQAEDPGAPSPQR) is disordered. A compositionally biased stretch (polar residues) spans 462–472 (PHTNGLLSPQQ). The residue at position 594 (Ser594) is a Phosphoserine. Residues 597-655 (APAAEDAKPKDLSDSSWIETPSSIKSIDSSDSGIYEQAKRRRISPADTPVSESSSPLKS) form a disordered region. Low complexity predominate over residues 618–628 (SSIKSIDSSDS). Phosphoserine is present on Ser640.

Homodimer. Part of a complex containing CASK, TBR1 and TSPYL2; may modulate gene expression in response to neuronal synaptic activity. Forms homodimers. Interacts with FOXP2. Interacts with FOXP1. Interacts with BCL11A. As to expression, expressed in the developing and adult cortex. Expressed in the olfactory bulbs.

Its subcellular location is the nucleus. Functionally, transcriptional repressor involved in multiple aspects of cortical development, including neuronal migration, laminar and areal identity, and axonal projection. As transcriptional repressor of FEZF2, it blocks the formation of the corticospinal (CS) tract from layer 6 projection neurons, thereby restricting the origin of CS axons specifically to layer 5 neurons. This Mus musculus (Mouse) protein is T-box brain protein 1 (Tbr1).